We begin with the raw amino-acid sequence, 335 residues long: MILSKPILLSAVQPSGNLTIGNYIGTMRHWSKMQNNYECLYCIADLHALTIQKNKIHLNKSILDTISFYLSCGVDPQKSIIFIQSHVYQHSQLNWILNCFSQFSELLRMTQFKIKSNCSKKINAALFNYPILMAADILLYQTNFVPVGQDQKQHVELTRNIAHRFNSLYGHVFTLPKPLITQHGSKIMSLLEPSKKMSKSDINKKNVIFLLDDIKTVISKIQNAYTDSETPSKIYYDIEKKPGISNLLEILSAITNKDIDILLKELEGMLYSEFKNIVADHLSKFLYKLQKSYNDYRNDEVYLKKIAYEGAMKSQLKSNKTLTKVYDKLGLIPLF.

Residues 13–15 and 21–22 each bind ATP; these read QPS and GN. Positions 14 to 22 match the 'HIGH' region motif; the sequence is PSGNLTIGN. Asp136 serves as a coordination point for L-tryptophan. ATP is bound by residues 148-150, Ile187, and 196-200; these read GQD and KMSKS. The short motif at 196 to 200 is the 'KMSKS' region element; the sequence is KMSKS.

It belongs to the class-I aminoacyl-tRNA synthetase family. As to quaternary structure, homodimer.

The protein resides in the cytoplasm. The catalysed reaction is tRNA(Trp) + L-tryptophan + ATP = L-tryptophyl-tRNA(Trp) + AMP + diphosphate + H(+). In terms of biological role, catalyzes the attachment of tryptophan to tRNA(Trp). The polypeptide is Tryptophan--tRNA ligase (Buchnera aphidicola subsp. Acyrthosiphon pisum (strain APS) (Acyrthosiphon pisum symbiotic bacterium)).